A 414-amino-acid chain; its full sequence is Argininosuccinate synthase (414 aa).

An ATP-binding site is contributed by 12–20; it reads AYSGGLDTS. Residues Y90 and S95 each coordinate L-citrulline. ATP is bound at residue G120. L-aspartate is bound by residues T122, N126, and D127. Position 126 (N126) interacts with L-citrulline. Residues R130, S179, S188, E264, and Y276 each contribute to the L-citrulline site.

It belongs to the argininosuccinate synthase family. Type 1 subfamily. In terms of assembly, homotetramer.

Its subcellular location is the cytoplasm. It catalyses the reaction L-citrulline + L-aspartate + ATP = 2-(N(omega)-L-arginino)succinate + AMP + diphosphate + H(+). Its pathway is amino-acid biosynthesis; L-arginine biosynthesis; L-arginine from L-ornithine and carbamoyl phosphate: step 2/3. The sequence is that of Argininosuccinate synthase from Alkaliphilus metalliredigens (strain QYMF).